Here is a 391-residue protein sequence, read N- to C-terminus: Leucine-rich repeat-containing protein 74B (391 aa).

The segment at 1 to 38 (MKGPCEVQKNEDQEGEAAATGPQAETLEAERSWTADSH) is disordered. The segment covering 28 to 38 (EAERSWTADSH) has biased composition (basic and acidic residues). 9 LRR repeats span residues 106–126 (YIKR…EALA), 134–154 (IISD…QAIC), 162–182 (TVEK…QHLA), 190–211 (GLKS…ILGP), 218–239 (GLTE…AFAR), 246–259 (FLKV…GFGD), 274–294 (VLEE…LKLG), 302–323 (TLRI…GLLK), and 332–354 (ALEL…ASSM). The tract at residues 371-391 (KDWPQASTPSQPASAPSDSGL) is disordered. The segment covering 374 to 391 (PQASTPSQPASAPSDSGL) has biased composition (low complexity).

This chain is Leucine-rich repeat-containing protein 74B, found in Mus musculus (Mouse).